Reading from the N-terminus, the 312-residue chain is Methionyl-tRNA formyltransferase (312 aa).

A (6S)-5,6,7,8-tetrahydrofolate-binding site is contributed by 110–113 (SLLP).

It belongs to the Fmt family.

The enzyme catalyses L-methionyl-tRNA(fMet) + (6R)-10-formyltetrahydrofolate = N-formyl-L-methionyl-tRNA(fMet) + (6S)-5,6,7,8-tetrahydrofolate + H(+). In terms of biological role, attaches a formyl group to the free amino group of methionyl-tRNA(fMet). The formyl group appears to play a dual role in the initiator identity of N-formylmethionyl-tRNA by promoting its recognition by IF2 and preventing the misappropriation of this tRNA by the elongation apparatus. In Mycobacterium ulcerans (strain Agy99), this protein is Methionyl-tRNA formyltransferase.